Reading from the N-terminus, the 160-residue chain is Lipoprotein signal peptidase (160 aa).

3 helical membrane-spanning segments follow: residues 6–26 (VWSSLFVVILAVLIDQGIKYL), 58–78 (LAWLHDGGLIAITLAVIAFVL), and 95–115 (FALVIGGAIGNLIDRVMHGYV). Active-site residues include Asp-117 and Asp-135. A helical transmembrane segment spans residues 127–147 (SFAVFNLADAFITIGAGLIIL).

Belongs to the peptidase A8 family.

Its subcellular location is the cell inner membrane. It catalyses the reaction Release of signal peptides from bacterial membrane prolipoproteins. Hydrolyzes -Xaa-Yaa-Zaa-|-(S,diacylglyceryl)Cys-, in which Xaa is hydrophobic (preferably Leu), and Yaa (Ala or Ser) and Zaa (Gly or Ala) have small, neutral side chains.. It functions in the pathway protein modification; lipoprotein biosynthesis (signal peptide cleavage). Its function is as follows. This protein specifically catalyzes the removal of signal peptides from prolipoproteins. The sequence is that of Lipoprotein signal peptidase from Brucella abortus (strain S19).